A 101-amino-acid chain; its full sequence is Small ribosomal subunit protein uS14 (101 aa).

The segment covering M1 to N10 has biased composition (basic and acidic residues). The segment at M1–K23 is disordered.

This sequence belongs to the universal ribosomal protein uS14 family. Part of the 30S ribosomal subunit. Contacts proteins S3 and S10.

Binds 16S rRNA, required for the assembly of 30S particles and may also be responsible for determining the conformation of the 16S rRNA at the A site. This is Small ribosomal subunit protein uS14 from Bradyrhizobium diazoefficiens (strain JCM 10833 / BCRC 13528 / IAM 13628 / NBRC 14792 / USDA 110).